The sequence spans 448 residues: Phosphoglucosamine mutase (448 aa).

Residue Ser104 is the Phosphoserine intermediate of the active site. 4 residues coordinate Mg(2+): Ser104, Asp243, Asp245, and Asp247. Residue Ser104 is modified to Phosphoserine.

This sequence belongs to the phosphohexose mutase family. Mg(2+) serves as cofactor. Activated by phosphorylation.

It carries out the reaction alpha-D-glucosamine 1-phosphate = D-glucosamine 6-phosphate. Functionally, catalyzes the conversion of glucosamine-6-phosphate to glucosamine-1-phosphate. The protein is Phosphoglucosamine mutase of Xylella fastidiosa (strain Temecula1 / ATCC 700964).